We begin with the raw amino-acid sequence, 793 residues long: Protocadherin beta-7 (793 aa).

The first 26 residues, 1–26, serve as a signal peptide directing secretion; that stretch reads MEARVERAVQKRQVLFLCVFLGMSWA. Residues 27–688 are Extracellular-facing; that stretch reads GAEPLRYFVA…DQANSLTVYL (662 aa). 5 consecutive Cadherin domains span residues 35-133, 138-242, 247-347, 352-451, and 456-561; these read VAEE…APVF, ISLK…APDF, YKVQ…RPEL, LTSP…APAF, and YTLF…SPFV. The N-linked (GlcNAc...) asparagine glycan is linked to Asn-169. Residues Asn-418 and Asn-436 are each glycosylated (N-linked (GlcNAc...) asparagine). Asn-567 carries an N-linked (GlcNAc...) asparagine glycan. One can recognise a Cadherin 6 domain in the interval 568 to 671; it reads SSAPCTEPLP…LVDGFSQPYL (104 aa). A helical membrane pass occupies residues 689–709; it reads VVALASVSSLFLLSVLLFVAV. The Cytoplasmic portion of the chain corresponds to 710–793; sequence RLCRRSRAAP…NRPFQNNLGF (84 aa).

The protein resides in the cell membrane. Functionally, potential calcium-dependent cell-adhesion protein. May be involved in the establishment and maintenance of specific neuronal connections in the brain. In Homo sapiens (Human), this protein is Protocadherin beta-7 (PCDHB7).